Reading from the N-terminus, the 566-residue chain is MOB kinase activator-like 2 (566 aa).

Disordered regions lie at residues 28 to 57 and 74 to 118; these read ADAT…SSLS and GRAV…GAQA. Over residues 35–57 the composition is skewed to low complexity; sequence SSTAPQTPTASTPRPSSSHSSLS. Over residues 85–115 the composition is skewed to gly residues; it reads QNGGKGNASGAGGGAGGGGAGGASGGTGGTG. Positions 209, 214, 289, and 294 each coordinate Zn(2+). Disordered regions lie at residues 346 to 407 and 498 to 541; these read GGCQ…SASA and FSNN…QCNA. The span at 367 to 388 shows a compositional bias: low complexity; sequence LQHQSLQQQQQHHNSSSNSTSS. A compositionally biased stretch (polar residues) spans 394 to 407; sequence VNSQSNNGSTSASA. A compositionally biased stretch (low complexity) spans 498-507; the sequence is FSNNNNNNHN. Residues 508 to 526 show a composition bias toward basic residues; that stretch reads LNHHHHHHHHHGHHGHHHA.

The protein belongs to the MOB1/phocein family. Interacts with and activates trc, also interacts with wts.

It is found in the cytoplasm. It localises to the nucleus. Required for the normal morphogenesis of a variety of polarized outgrowths including epidermal hairs, bristles, arista laterals, and dendrites. This chain is MOB kinase activator-like 2 (Mob2), found in Drosophila melanogaster (Fruit fly).